Here is a 470-residue protein sequence, read N- to C-terminus: Maturase K (470 aa).

This sequence belongs to the intron maturase 2 family. MatK subfamily.

The protein localises to the plastid. It localises to the chloroplast. Usually encoded in the trnK tRNA gene intron. Probably assists in splicing its own and other chloroplast group II introns. The sequence is that of Maturase K from Nypa fruticans (Nypa palm).